The primary structure comprises 208 residues: Small ribosomal subunit protein eS8 (208 aa).

Positions Met-1–Ala-33 are disordered. A compositionally biased stretch (basic residues) spans His-7–Lys-26.

The protein belongs to the eukaryotic ribosomal protein eS8 family.

In Apis mellifera (Honeybee), this protein is Small ribosomal subunit protein eS8 (RpS8).